Consider the following 465-residue polypeptide: FAD-dependent monooxygenase olcE (465 aa).

Residues 9-29 (IIIGGSVAGLTLALSLNKIGI) traverse the membrane as a helical segment. The FAD site is built by E35, G49, R108, D308, and A321.

This sequence belongs to the paxM FAD-dependent monooxygenase family. FAD serves as cofactor.

The protein localises to the membrane. The protein operates within secondary metabolite biosynthesis; terpenoid biosynthesis. Functionally, FAD-dependent monooxygenase; part of the gene cluster that mediates the biosynthesis of 15-deoxyoxalicine B. The first step of the pathway is the synthesis of nicotinyl-CoA from nicotinic acid by the nicotinic acid-CoA ligase olcI. Nicotinyl-CoA is then a substrate of polyketide synthase olcA to produce 4-hydroxy-6-(3-pyridinyl)-2H-pyran-2-one (HPPO) which is further prenylated by the polyprenyl transferase olcH to yield geranylgeranyl-HPPO. Geranylgeranyl pyrophosphate is provided by the cluster-specific geranylgeranyl pyrophosphate synthase olcC. The FAD-dependent monooxygenase olcE catalyzes the epoxidation of geranylgeranyl-HPPO and the terpene cyclase olcD catalyzes the cyclization of the terpenoid component, resulting in the formation of the tricyclic terpene moiety seen in predecaturin E. The cytochrome P450 monooxygenase then catalyzes the allylic oxidation of predecaturin E, which is followed by spirocylization with concomitant loss of one molecule of water to form decaturin E. Decaturin E is the substrate of the cytochrome P450 monooxygenase olcJ which hydroxylates it at the C-29 position to form decaturin F. The short-chain dehydrogenase/reductase olcF may catalyze the oxidation of decaturin F to generate the 29-hydroxyl-27-one intermediate, and subsequent hemiacetal formation probably leads to the formation of decaturin C. The dioxygenase olcK may be a peroxisomal enzyme that catalyzes the hydroxylation of decaturin C into decaturin A once decaturin C is shuttled into the peroxisome by the MFS transporter olcL. Finally the cytochrome P450 monooxygenase olcB catalyzes the oxidative rearrangement to yield 15-deoxyoxalicine B. In the absence of olcJ, decaturin E may be shunted to a pathway in which it is oxidized to a ketone, possibly by olcF, to form decaturin D, which undergoes further allylic oxidation to yield decaturin G. Moreover, in the absence of oclK or oclL, oclB can convert decaturin C into 15-deoxyoxalicine A. The polypeptide is FAD-dependent monooxygenase olcE (Penicillium canescens).